A 113-amino-acid polypeptide reads, in one-letter code: U11-theraphotoxin-Hhn1g (113 aa).

The N-terminal stretch at 1–21 (MNTVRVTFLLVFVLAVSLGQA) is a signal peptide. The propeptide occupies 22 to 74 (DKDENRMEMQEKTEQGKSYLDFAENLLLQKLEELEAKLLEEDSEESRNSRQKR). Residues 61 to 83 (EEDSEESRNSRQKRCIGEGVPCD) are disordered. 3 disulfide bridges follow: Cys75-Cys90, Cys82-Cys95, and Cys89-Cys110.

This sequence belongs to the neurotoxin 14 (magi-1) family. 01 (HNTX-16) subfamily. Expressed by the venom gland.

The protein localises to the secreted. Its function is as follows. Probable ion channel inhibitor. The chain is U11-theraphotoxin-Hhn1g from Cyriopagopus hainanus (Chinese bird spider).